The sequence spans 127 residues: Large ribosomal subunit protein bL12 (127 aa).

It belongs to the bacterial ribosomal protein bL12 family. Homodimer. Part of the ribosomal stalk of the 50S ribosomal subunit. Forms a multimeric L10(L12)X complex, where L10 forms an elongated spine to which 2 to 4 L12 dimers bind in a sequential fashion. Binds GTP-bound translation factors.

Its function is as follows. Forms part of the ribosomal stalk which helps the ribosome interact with GTP-bound translation factors. Is thus essential for accurate translation. The chain is Large ribosomal subunit protein bL12 from Sinorhizobium fredii (strain NBRC 101917 / NGR234).